A 434-amino-acid chain; its full sequence is D-amino acid dehydrogenase (434 aa).

3–17 (VLVLGSGVIGTTSAW) is an FAD binding site.

It belongs to the DadA oxidoreductase family. It depends on FAD as a cofactor.

It catalyses the reaction a D-alpha-amino acid + A + H2O = a 2-oxocarboxylate + AH2 + NH4(+). The protein operates within amino-acid degradation; D-alanine degradation; NH(3) and pyruvate from D-alanine: step 1/1. In terms of biological role, oxidative deamination of D-amino acids. In Stenotrophomonas maltophilia (strain R551-3), this protein is D-amino acid dehydrogenase.